Reading from the N-terminus, the 202-residue chain is MSYLIPYVIEQTNRGERSYDIYSRLLKDRIVFLGTPIDDQVANVVIAQLLFLESEDPDKPVNLYINSPGGSVSAGLGIYDAMQHIKSPVNTTVVGMAASMAALLLAAGTGKRYALPNARVMIHQPHLSGVGGQVTDIEITAREAVKTKQLMAEILAKHSGQSVERILADTERDRWMSAQEAVEYGLVDEVLHPREKASRSAR.

Residue S99 is the Nucleophile of the active site. The active site involves H123.

Belongs to the peptidase S14 family. In terms of assembly, fourteen ClpP subunits assemble into 2 heptameric rings which stack back to back to give a disk-like structure with a central cavity, resembling the structure of eukaryotic proteasomes.

It is found in the cytoplasm. The enzyme catalyses Hydrolysis of proteins to small peptides in the presence of ATP and magnesium. alpha-casein is the usual test substrate. In the absence of ATP, only oligopeptides shorter than five residues are hydrolyzed (such as succinyl-Leu-Tyr-|-NHMec, and Leu-Tyr-Leu-|-Tyr-Trp, in which cleavage of the -Tyr-|-Leu- and -Tyr-|-Trp bonds also occurs).. In terms of biological role, cleaves peptides in various proteins in a process that requires ATP hydrolysis. Has a chymotrypsin-like activity. Plays a major role in the degradation of misfolded proteins. This is ATP-dependent Clp protease proteolytic subunit 1 from Symbiobacterium thermophilum (strain DSM 24528 / JCM 14929 / IAM 14863 / T).